Here is a 54-residue protein sequence, read N- to C-terminus: Large ribosomal subunit protein bL33A (54 aa).

The protein belongs to the bacterial ribosomal protein bL33 family.

The sequence is that of Large ribosomal subunit protein bL33A from Mycobacterium marinum (strain ATCC BAA-535 / M).